The following is an 89-amino-acid chain: Small ribosomal subunit protein uS14 (89 aa).

The protein belongs to the universal ribosomal protein uS14 family. In terms of assembly, part of the 30S ribosomal subunit. Contacts proteins S3 and S10.

In terms of biological role, binds 16S rRNA, required for the assembly of 30S particles and may also be responsible for determining the conformation of the 16S rRNA at the A site. This Oenococcus oeni (strain ATCC BAA-331 / PSU-1) protein is Small ribosomal subunit protein uS14.